The chain runs to 89 residues: Small ribosomal subunit protein uS15 (89 aa).

This sequence belongs to the universal ribosomal protein uS15 family. Part of the 30S ribosomal subunit. Forms a bridge to the 50S subunit in the 70S ribosome, contacting the 23S rRNA.

Its function is as follows. One of the primary rRNA binding proteins, it binds directly to 16S rRNA where it helps nucleate assembly of the platform of the 30S subunit by binding and bridging several RNA helices of the 16S rRNA. In terms of biological role, forms an intersubunit bridge (bridge B4) with the 23S rRNA of the 50S subunit in the ribosome. This Coxiella burnetii (strain CbuK_Q154) (Coxiella burnetii (strain Q154)) protein is Small ribosomal subunit protein uS15.